The sequence spans 829 residues: Periplasmic nitrate reductase (829 aa).

The segment at residues 1–29 (MKMTRRAFVKANAAASAAAVAGITLPASA) is a signal peptide (tat-type signal). The 4Fe-4S Mo/W bis-MGD-type domain occupies 41–97 (ITWDKAPCRFCGTGCSVLVGTQNGKVVATQGDPEAPVNKGLNCIKGYFLSKIMYGQD). [4Fe-4S] cluster contacts are provided by Cys48, Cys51, Cys55, and Cys83. Mo-bis(molybdopterin guanine dinucleotide) contacts are provided by residues Lys85, Gln152, Asn177, Cys181, 214–221 (WGSNMAEM), 245–249 (STYYH), 264–266 (QSD), Met374, Gln378, Asn484, 510–511 (SD), Lys533, Asp560, and 718–727 (TGRVLEHWHT). Phe794 provides a ligand contact to substrate. Mo-bis(molybdopterin guanine dinucleotide) contacts are provided by Asn802 and Lys819.

Belongs to the prokaryotic molybdopterin-containing oxidoreductase family. NasA/NapA/NarB subfamily. In terms of assembly, component of the periplasmic nitrate reductase NapAB complex composed of NapA and NapB. It depends on [4Fe-4S] cluster as a cofactor. Mo-bis(molybdopterin guanine dinucleotide) is required as a cofactor. Predicted to be exported by the Tat system. The position of the signal peptide cleavage has not been experimentally proven.

The protein localises to the periplasm. The catalysed reaction is 2 Fe(II)-[cytochrome] + nitrate + 2 H(+) = 2 Fe(III)-[cytochrome] + nitrite + H2O. In terms of biological role, catalytic subunit of the periplasmic nitrate reductase complex NapAB. Receives electrons from NapB and catalyzes the reduction of nitrate to nitrite. The polypeptide is Periplasmic nitrate reductase (Vibrio campbellii (strain ATCC BAA-1116)).